The primary structure comprises 1404 residues: Probable GPI-anchored adhesin-like protein PGA55 (1404 aa).

Residues 1 to 19 (MVLLCKYKVSWVFVLSVAG) form the signal peptide. 87 consecutive repeat copies span residues 104–109 (VSSSSS), 136–141 (VSSSSE), 156–161 (VSSSSK), 162–167 (VSSSSE), 183–188 (VSSSSQ), 196–201 (VSSSSE), 203–208 (VSSSSE), 209–214 (VSSSSE), 216–221 (VSSSSE), 222–227 (VSSSSE), 228–233 (VSSSSE), 234–239 (VSSSSQ), 247–252 (VSSSSE), 253–258 (VSSSSS), 261–266 (VSSSSE), 267–272 (VSSSSE), 274–279 (VSSSSE), 280–285 (VSSSSE), 286–291 (VSSSSE), 292–297 (VSSSSE), 298–303 (VSSSSE), 304–309 (VSSSSQ), 317–322 (VSSSSE), 324–329 (VSSSSE), 330–335 (VSSSSE), 336–341 (VSSSSE), 343–348 (VSSSSE), 349–354 (VSSSSE), 355–360 (VSSSSE), 361–366 (VSSSSQ), 374–379 (VSSSSE), 380–385 (VSSSSS), 388–393 (VSSSSE), 394–399 (VSSSSE), 401–406 (VSSSSE), 407–412 (VSSSSE), 413–418 (VSSSSE), 419–424 (VSSSSE), 425–430 (VSSSSE), 431–436 (VSSSSQ), 444–449 (VSSSSE), 450–455 (VSSSSE), 457–462 (VSSSSE), 463–468 (VSSSSE), 469–474 (VSSSSE), 475–480 (VSSSSQ), 488–493 (VSSSSE), 494–500 (VSSSSSE), 502–507 (VSSSSE), 508–513 (VSSSSE), 515–520 (VSSSSE), 521–526 (VSSSSE), 527–532 (VSSSSE), 533–538 (VSSSSQ), 546–551 (VSSSSE), 552–557 (VSSSSS), 560–565 (VSSSSE), 566–571 (VSSSSE), 573–578 (VSSSSE), 579–584 (VSSSSE), 585–590 (VSSSSE), 591–596 (VSSSSQ), 604–609 (VSSSSE), 611–616 (VSSSSE), 617–622 (VSSSSE), 623–628 (VSSSSE), 629–634 (VSSSSE), 635–640 (VSSSSE), 641–646 (VSSSSQ), 654–659 (VSSSSE), 660–665 (VSSSSS), 668–673 (VSSSSE), 674–679 (VSSSSE), 681–686 (VSSSSE), 687–692 (VSSSSE), 693–698 (VSSSSE), 699–704 (VSSSSQ), 712–717 (VSSSSE), 719–724 (VSSSSE), 725–730 (VSSSSE), 731–736 (VSSSSE), 737–742 (VSSSSE), 743–748 (VSSSSE), 749–754 (VSSSSE), 771–776 (VTSSSE), 777–782 (VSSSSQ), and 797–802 (VSSSSE). Positions 104 to 541 (VSSSSSEVIS…EVSSSSQVTS (438 aa)) are 88 X 6 AA approximate tandem repeats. The interval 113–833 (SSSSEEASSS…VSSSSASSEV (721 aa)) is disordered. N817 carries N-linked (GlcNAc...) asparagine glycosylation. The 1-88 repeat unit spans residues 824-829 (VSSSSA). N-linked (GlcNAc...) asparagine glycosylation is found at N994 and N1074. The GPI-anchor amidated asparagine moiety is linked to residue N1382. Positions 1383–1404 (AASRQSFNYKFIVGLILAYIIA) are cleaved as a propeptide — removed in mature form.

It localises to the cell membrane. Its function is as follows. Predicted GPI-anchored adhesin-like protein which may be involved in filamentous growth and chlamydospore formation. This chain is Probable GPI-anchored adhesin-like protein PGA55 (PGA55), found in Candida albicans (strain SC5314 / ATCC MYA-2876) (Yeast).